The sequence spans 416 residues: UDP-N-acetylglucosamine 1-carboxyvinyltransferase (416 aa).

22–23 is a binding site for phosphoenolpyruvate; the sequence is KN. Arg92 provides a ligand contact to UDP-N-acetyl-alpha-D-glucosamine. The active-site Proton donor is the Cys116. Position 116 is a 2-(S-cysteinyl)pyruvic acid O-phosphothioketal (Cys116). Residues 121 to 125, Asp304, and Ile326 each bind UDP-N-acetyl-alpha-D-glucosamine; that span reads RPIDQ.

It belongs to the EPSP synthase family. MurA subfamily.

The protein resides in the cytoplasm. It carries out the reaction phosphoenolpyruvate + UDP-N-acetyl-alpha-D-glucosamine = UDP-N-acetyl-3-O-(1-carboxyvinyl)-alpha-D-glucosamine + phosphate. The protein operates within cell wall biogenesis; peptidoglycan biosynthesis. Cell wall formation. Adds enolpyruvyl to UDP-N-acetylglucosamine. This Desulfatibacillum aliphaticivorans protein is UDP-N-acetylglucosamine 1-carboxyvinyltransferase.